The following is a 510-amino-acid chain: NAD(P)H-quinone oxidoreductase subunit 2, chloroplastic (510 aa).

12 helical membrane passes run 24-44, 59-79, 99-119, 124-144, 149-169, 183-203, 229-249, 295-315, 323-343, 354-374, 395-415, and 418-438; these read LLLF…GLIL, WFYF…LFRW, IFQF…VEYI, MAIT…MFLC, LITI…LSGY, YLLM…WLYG, ISIA…PAPF, WHLL…LIAI, MLAY…IVGD, YMLF…LFGL, ALSS…AGFF, and LHLF…IGLL.

The protein belongs to the complex I subunit 2 family. As to quaternary structure, NDH is composed of at least 16 different subunits, 5 of which are encoded in the nucleus.

It is found in the plastid. The protein localises to the chloroplast thylakoid membrane. It catalyses the reaction a plastoquinone + NADH + (n+1) H(+)(in) = a plastoquinol + NAD(+) + n H(+)(out). It carries out the reaction a plastoquinone + NADPH + (n+1) H(+)(in) = a plastoquinol + NADP(+) + n H(+)(out). Its function is as follows. NDH shuttles electrons from NAD(P)H:plastoquinone, via FMN and iron-sulfur (Fe-S) centers, to quinones in the photosynthetic chain and possibly in a chloroplast respiratory chain. The immediate electron acceptor for the enzyme in this species is believed to be plastoquinone. Couples the redox reaction to proton translocation, and thus conserves the redox energy in a proton gradient. This Ensete ventricosum (Abyssinian banana) protein is NAD(P)H-quinone oxidoreductase subunit 2, chloroplastic.